Consider the following 212-residue polypeptide: ATP-dependent dethiobiotin synthetase BioD (212 aa).

ATP is bound at residue 13 to 18 (GIGKTV). T17 contacts Mg(2+). The active site involves K33. S37 serves as a coordination point for substrate. Mg(2+) is bound at residue E100. Residues 100–103 (EGAG) and 184–186 (PRL) contribute to the ATP site.

Belongs to the dethiobiotin synthetase family. Homodimer. The cofactor is Mg(2+).

The protein resides in the cytoplasm. The catalysed reaction is (7R,8S)-7,8-diammoniononanoate + CO2 + ATP = (4R,5S)-dethiobiotin + ADP + phosphate + 3 H(+). It participates in cofactor biosynthesis; biotin biosynthesis; biotin from 7,8-diaminononanoate: step 1/2. Catalyzes a mechanistically unusual reaction, the ATP-dependent insertion of CO2 between the N7 and N8 nitrogen atoms of 7,8-diaminopelargonic acid (DAPA, also called 7,8-diammoniononanoate) to form a ureido ring. The chain is ATP-dependent dethiobiotin synthetase BioD from Rhodopseudomonas palustris (strain ATCC BAA-98 / CGA009).